The primary structure comprises 605 residues: Glutamine--fructose-6-phosphate aminotransferase [isomerizing] (605 aa).

The Nucleophile; for GATase activity role is filled by cysteine 2. A Glutamine amidotransferase type-2 domain is found at 2-220 (CGIVGVTGKD…DGEIVVVKPD (219 aa)). SIS domains lie at 286-426 (LLTA…VDQP) and 458-595 (AKSA…VDKP). The active-site For Fru-6P isomerization activity is the lysine 600.

As to quaternary structure, homodimer.

It is found in the cytoplasm. The enzyme catalyses D-fructose 6-phosphate + L-glutamine = D-glucosamine 6-phosphate + L-glutamate. Its function is as follows. Catalyzes the first step in hexosamine metabolism, converting fructose-6P into glucosamine-6P using glutamine as a nitrogen source. This chain is Glutamine--fructose-6-phosphate aminotransferase [isomerizing], found in Lactiplantibacillus plantarum (strain ATCC BAA-793 / NCIMB 8826 / WCFS1) (Lactobacillus plantarum).